A 468-amino-acid chain; its full sequence is Methylenetetrahydrofolate--tRNA-(uracil-5-)-methyltransferase TrmFO (468 aa).

10–15 (GGGLAG) serves as a coordination point for FAD.

This sequence belongs to the MnmG family. TrmFO subfamily. FAD serves as cofactor.

It localises to the cytoplasm. It carries out the reaction uridine(54) in tRNA + (6R)-5,10-methylene-5,6,7,8-tetrahydrofolate + NADH + H(+) = 5-methyluridine(54) in tRNA + (6S)-5,6,7,8-tetrahydrofolate + NAD(+). The catalysed reaction is uridine(54) in tRNA + (6R)-5,10-methylene-5,6,7,8-tetrahydrofolate + NADPH + H(+) = 5-methyluridine(54) in tRNA + (6S)-5,6,7,8-tetrahydrofolate + NADP(+). Its function is as follows. Catalyzes the folate-dependent formation of 5-methyl-uridine at position 54 (M-5-U54) in all tRNAs. This Chelativorans sp. (strain BNC1) protein is Methylenetetrahydrofolate--tRNA-(uracil-5-)-methyltransferase TrmFO.